The following is a 205-amino-acid chain: S-crystallin SL11 (205 aa).

In terms of domain architecture, GST N-terminal spans 2–80 (PSYTLYYFNG…YLAREFGFYG (79 aa)). Residues 82-205 (NNMDMFKVDC…YIKKRNNTAF (124 aa)) form the GST C-terminal domain.

It belongs to the GST superfamily. As to expression, lens.

In terms of biological role, S-crystallins are structural components of squids and octopi eye lens. Contains relatively little if any GST activity. This Nototodarus sloanii (Wellington flying squid) protein is S-crystallin SL11.